Here is a 457-residue protein sequence, read N- to C-terminus: Protein translocase subunit SecY (457 aa).

Transmembrane regions (helical) follow at residues 17–37 (IFFTFSLLALCRIGVFIPVPG), 75–95 (IALGVVPYISASIIVQLLVVF), 120–140 (LFTLLLACVQSLLFAKFALRM), 163–183 (VFYLTTVVVMTTGTLLLMWIG), 195–215 (ISLIITLGMLASFPSVLGSIF), 230–250 (IVSLLVLCAVFVFVLMATVLI), 287–307 (VIPVIFASSLLMFPATIGQFL), 326–346 (VVYSIFYVLLIIFFTYFWTAT), 386–406 (LLGAVFLAVVAILPSILGRIL), and 412–432 (VSYFLGGTAMLIVVGVVLDTM).

Belongs to the SecY/SEC61-alpha family. In terms of assembly, component of the Sec protein translocase complex. Heterotrimer consisting of SecY, SecE and SecG subunits. The heterotrimers can form oligomers, although 1 heterotrimer is thought to be able to translocate proteins. Interacts with the ribosome. Interacts with SecDF, and other proteins may be involved. Interacts with SecA.

It localises to the cell inner membrane. In terms of biological role, the central subunit of the protein translocation channel SecYEG. Consists of two halves formed by TMs 1-5 and 6-10. These two domains form a lateral gate at the front which open onto the bilayer between TMs 2 and 7, and are clamped together by SecE at the back. The channel is closed by both a pore ring composed of hydrophobic SecY resides and a short helix (helix 2A) on the extracellular side of the membrane which forms a plug. The plug probably moves laterally to allow the channel to open. The ring and the pore may move independently. The polypeptide is Protein translocase subunit SecY (Chlamydia muridarum (strain MoPn / Nigg)).